The chain runs to 307 residues: Mediator of RNA polymerase II transcription subunit 18 (307 aa).

Positions 117-126 are enriched in polar residues; the sequence is TNFNSTNEDQ. The interval 117 to 162 is disordered; sequence TNFNSTNEDQNNSKHTEDTVNESRNSDDIIDVDMDASPAPSNESCS.

Belongs to the Mediator complex subunit 18 family. As to quaternary structure, component of the Mediator complex, which is composed of at least 21 subunits that form three structurally distinct submodules. The Mediator head module contains MED6, MED8, MED11, SRB4/MED17, SRB5/MED18, ROX3/MED19, SRB2/MED20 and SRB6/MED22, the middle module contains MED1, MED4, NUT1/MED5, MED7, CSE2/MED9, NUT2/MED10, SRB7/MED21 and SOH1/MED31, and the tail module contains MED2, PGD1/MED3, RGR1/MED14, GAL11/MED15 and SIN4/MED16. The head and the middle modules interact directly with RNA polymerase II, whereas the elongated tail module interacts with gene-specific regulatory proteins. SRB5/MED18 interacts directly with MED8 and SRB2/MED20.

It localises to the nucleus. Functionally, component of the Mediator complex, a coactivator involved in the regulated transcription of nearly all RNA polymerase II-dependent genes. Mediator functions as a bridge to convey information from gene-specific regulatory proteins to the basal RNA polymerase II transcription machinery. The Mediator complex, having a compact conformation in its free form, is recruited to promoters by direct interactions with regulatory proteins and serves for the assembly of a functional preinitiation complex with RNA polymerase II and the general transcription factors. The Mediator complex unfolds to an extended conformation and partially surrounds RNA polymerase II, specifically interacting with the unphosphorylated form of the C-terminal domain (CTD) of RNA polymerase II. The Mediator complex dissociates from the RNA polymerase II holoenzyme and stays at the promoter when transcriptional elongation begins. This is Mediator of RNA polymerase II transcription subunit 18 (SRB5) from Saccharomyces cerevisiae (strain ATCC 204508 / S288c) (Baker's yeast).